The primary structure comprises 350 residues: Enoyl-[acyl-carrier-protein] reductase, mitochondrial (350 aa).

The N-terminal 14 residues, 1 to 14 (MNSTRNIISLVRRY), are a transit peptide targeting the mitochondrion. Tyr69 serves as the catalytic Proton donor. Residues Asn143, 169-172 (NSMV), 192-194 (RDG), 261-264 (YGGM), 286-288 (FWL), and Lys343 each bind NADP(+).

The protein belongs to the zinc-containing alcohol dehydrogenase family. Quinone oxidoreductase subfamily. As to quaternary structure, homodimer.

It is found in the mitochondrion. It catalyses the reaction a 2,3-saturated acyl-[ACP] + NADP(+) = a (2E)-enoyl-[ACP] + NADPH + H(+). Catalyzes the NADPH-dependent reduction of trans-2-enoyl thioesters in mitochondrial fatty acid synthesis (fatty acid synthesis type II). Fatty acid chain elongation in mitochondria uses acyl carrier protein (ACP) as an acyl group carrier, but the enzyme accepts both ACP and CoA thioesters as substrates in vitro. In Dictyostelium discoideum (Social amoeba), this protein is Enoyl-[acyl-carrier-protein] reductase, mitochondrial (mecr).